Consider the following 203-residue polypeptide: Peptidyl-prolyl cis-trans isomerase FKBP11 (203 aa).

An N-terminal signal peptide occupies residues 1–29; that stretch reads MTLRPSLLPLRLLLLLLLLLRGAVCQAEA. The PPIase FKBP-type domain occupies 59 to 146; that stretch reads GDTLHIHYSG…HFDVELIALI (88 aa). Residues 158-178 form a helical membrane-spanning segment; the sequence is ILPLVGMAMVPALLGLIGYHL.

Belongs to the FKBP-type PPIase family. In terms of assembly, interacts with IFITM5.

It is found in the membrane. The enzyme catalyses [protein]-peptidylproline (omega=180) = [protein]-peptidylproline (omega=0). Functionally, PPIases accelerate the folding of proteins during protein synthesis. The protein is Peptidyl-prolyl cis-trans isomerase FKBP11 (FKBP11) of Bos taurus (Bovine).